Here is a 210-residue protein sequence, read N- to C-terminus: ATP-dependent dethiobiotin synthetase BioD (210 aa).

Position 13-18 (13-18 (DVGKTV)) interacts with ATP. Thr17 lines the Mg(2+) pocket. Lys33 is a catalytic residue. Mg(2+) is bound by residues Arg47 and Glu101. ATP-binding positions include 101–104 (EGAG) and 185–187 (PPL).

Belongs to the dethiobiotin synthetase family. As to quaternary structure, homodimer. Mg(2+) is required as a cofactor.

It is found in the cytoplasm. The enzyme catalyses (7R,8S)-7,8-diammoniononanoate + CO2 + ATP = (4R,5S)-dethiobiotin + ADP + phosphate + 3 H(+). Its pathway is cofactor biosynthesis; biotin biosynthesis; biotin from 7,8-diaminononanoate: step 1/2. Its function is as follows. Catalyzes a mechanistically unusual reaction, the ATP-dependent insertion of CO2 between the N7 and N8 nitrogen atoms of 7,8-diaminopelargonic acid (DAPA, also called 7,8-diammoniononanoate) to form a ureido ring. The sequence is that of ATP-dependent dethiobiotin synthetase BioD from Afipia carboxidovorans (strain ATCC 49405 / DSM 1227 / KCTC 32145 / OM5) (Oligotropha carboxidovorans).